We begin with the raw amino-acid sequence, 367 residues long: Glutamate 5-kinase (367 aa).

Lysine 10 contributes to the ATP binding site. Residues serine 50, aspartate 137, and asparagine 149 each contribute to the substrate site. Residues 169–170 (TD) and 211–217 (TGGMGTK) contribute to the ATP site. The PUA domain maps to 275 to 353 (AGELTVDAGA…QQIDAILGYE (79 aa)).

This sequence belongs to the glutamate 5-kinase family.

It is found in the cytoplasm. The catalysed reaction is L-glutamate + ATP = L-glutamyl 5-phosphate + ADP. It functions in the pathway amino-acid biosynthesis; L-proline biosynthesis; L-glutamate 5-semialdehyde from L-glutamate: step 1/2. Catalyzes the transfer of a phosphate group to glutamate to form L-glutamate 5-phosphate. In Klebsiella pneumoniae (strain 342), this protein is Glutamate 5-kinase.